A 625-amino-acid polypeptide reads, in one-letter code: tRNA uridine 5-carboxymethylaminomethyl modification enzyme MnmG (625 aa).

Residues 13 to 18, Val125, and Ser182 contribute to the FAD site; that span reads GGGHAG. Residue 276–290 participates in NAD(+) binding; it reads GPRYCPSIEDKITRF. Gln373 serves as a coordination point for FAD.

Belongs to the MnmG family. As to quaternary structure, homodimer. Heterotetramer of two MnmE and two MnmG subunits. The cofactor is FAD.

The protein localises to the cytoplasm. In terms of biological role, NAD-binding protein involved in the addition of a carboxymethylaminomethyl (cmnm) group at the wobble position (U34) of certain tRNAs, forming tRNA-cmnm(5)s(2)U34. The polypeptide is tRNA uridine 5-carboxymethylaminomethyl modification enzyme MnmG (Lactococcus lactis subsp. lactis (strain IL1403) (Streptococcus lactis)).